Here is a 272-residue protein sequence, read N- to C-terminus: Eukaryotic translation initiation factor 3 subunit G (272 aa).

Disordered stretches follow at residues 1 to 28 (MPAL…PTEI) and 143 to 187 (AGKA…RGRD). Residues 190–268 (TAIRISNLSE…LILNVEWSKP (79 aa)) enclose the RRM domain.

Belongs to the eIF-3 subunit G family. In terms of assembly, component of the eukaryotic translation initiation factor 3 (eIF-3) complex.

It is found in the cytoplasm. Its function is as follows. RNA-binding component of the eukaryotic translation initiation factor 3 (eIF-3) complex, which is involved in protein synthesis of a specialized repertoire of mRNAs and, together with other initiation factors, stimulates binding of mRNA and methionyl-tRNAi to the 40S ribosome. The eIF-3 complex specifically targets and initiates translation of a subset of mRNAs involved in cell proliferation. This subunit can bind 18S rRNA. The sequence is that of Eukaryotic translation initiation factor 3 subunit G from Culex quinquefasciatus (Southern house mosquito).